A 227-amino-acid chain; its full sequence is GTP:AMP phosphotransferase AK3, mitochondrial (227 aa).

GTP is bound by residues Gly17, Gly19, Lys20, Gly21, and Thr22. At Lys20 the chain carries N6-succinyllysine. Lys29 bears the N6-acetyllysine; alternate mark. At Lys29 the chain carries N6-succinyllysine; alternate. An N6-acetyllysine modification is found at Lys34. A Phosphoserine modification is found at Ser37. Positions 37–66 (SSGDLLRQNMLQGTEIAVLAKSFIDQGKLI) are NMP. Positions 38 and 43 each coordinate AMP. N6-succinyllysine is present on Lys57. Residues Lys64 and Lys80 each carry the N6-acetyllysine; alternate modification. An N6-succinyllysine; alternate mark is found at Lys64 and Lys80. Lys64 provides a ligand contact to AMP. Positions 91, 94, and 98 each coordinate AMP. Residues 127 to 164 (ARWIHPASGRVYNIEFNPPKTVGIDDLTGEPLIQREDD) form an LID region. GTP is bound by residues Arg128, Tyr138, Asn139, Arg161, and Arg172. Residues Lys174 and Lys189 each carry the N6-acetyllysine; alternate modification. N6-succinyllysine; alternate occurs at positions 174 and 189. Residue Thr201 coordinates GTP. Lys203 carries the N6-acetyllysine modification.

It belongs to the adenylate kinase family. AK3 subfamily. As to quaternary structure, monomer.

It localises to the mitochondrion matrix. It carries out the reaction a ribonucleoside 5'-triphosphate + AMP = a ribonucleoside 5'-diphosphate + ADP. The enzyme catalyses GTP + AMP = GDP + ADP. It catalyses the reaction ITP + AMP = IDP + ADP. Functionally, mitochondrial adenylate kinase with a specific GTP:AMP phosphotransferase activity. Could also use ITP as phosphate donor. Its physiological function is to recycle GTP into GDP which is necessary for the TCA cycle in the mitochondrial matrix. The chain is GTP:AMP phosphotransferase AK3, mitochondrial from Rattus norvegicus (Rat).